Consider the following 232-residue polypeptide: Phosphatidylserine decarboxylase proenzyme (232 aa).

The active-site Schiff-base intermediate with substrate; via pyruvic acid is serine 190. Residue serine 190 is modified to Pyruvic acid (Ser); by autocatalysis.

This sequence belongs to the phosphatidylserine decarboxylase family. PSD-A subfamily. As to quaternary structure, heterodimer of a large membrane-associated beta subunit and a small pyruvoyl-containing alpha subunit. It depends on pyruvate as a cofactor. Post-translationally, is synthesized initially as an inactive proenzyme. Formation of the active enzyme involves a self-maturation process in which the active site pyruvoyl group is generated from an internal serine residue via an autocatalytic post-translational modification. Two non-identical subunits are generated from the proenzyme in this reaction, and the pyruvate is formed at the N-terminus of the alpha chain, which is derived from the carboxyl end of the proenzyme. The post-translation cleavage follows an unusual pathway, termed non-hydrolytic serinolysis, in which the side chain hydroxyl group of the serine supplies its oxygen atom to form the C-terminus of the beta chain, while the remainder of the serine residue undergoes an oxidative deamination to produce ammonia and the pyruvoyl prosthetic group on the alpha chain.

The protein localises to the cell membrane. It catalyses the reaction a 1,2-diacyl-sn-glycero-3-phospho-L-serine + H(+) = a 1,2-diacyl-sn-glycero-3-phosphoethanolamine + CO2. Its pathway is phospholipid metabolism; phosphatidylethanolamine biosynthesis; phosphatidylethanolamine from CDP-diacylglycerol: step 2/2. Functionally, catalyzes the formation of phosphatidylethanolamine (PtdEtn) from phosphatidylserine (PtdSer). The polypeptide is Phosphatidylserine decarboxylase proenzyme (Bartonella bacilliformis (strain ATCC 35685 / KC583 / Herrer 020/F12,63)).